We begin with the raw amino-acid sequence, 556 residues long: Formate--tetrahydrofolate ligase (556 aa).

Residue 65-72 (TPAGEGKS) participates in ATP binding.

Belongs to the formate--tetrahydrofolate ligase family.

It carries out the reaction (6S)-5,6,7,8-tetrahydrofolate + formate + ATP = (6R)-10-formyltetrahydrofolate + ADP + phosphate. The protein operates within one-carbon metabolism; tetrahydrofolate interconversion. The sequence is that of Formate--tetrahydrofolate ligase from Clostridium perfringens (strain SM101 / Type A).